Consider the following 628-residue polypeptide: uncharacterized protein (628 aa).

Disordered regions lie at residues 1-65 and 80-125; these read MDTN…ISSA and SLRN…VSLS. Over residues 12–21 the composition is skewed to low complexity; sequence ISPSIASSFP. Over residues 25–37 the composition is skewed to polar residues; the sequence is PFSSQNSTTSNPE. 2 stretches are compositionally biased toward low complexity: residues 48 to 64 and 87 to 102; these read SSIIISQQPLSPSNISS and SPHIPSPSSFSSSSSS. Over residues 103–116 the composition is skewed to basic and acidic residues; the sequence is DLDKSMLDEKHPDS. Transmembrane regions (helical) follow at residues 157 to 177, 203 to 223, 230 to 250, 259 to 279, 294 to 314, 324 to 344, 417 to 437, 454 to 474, 483 to 503, 511 to 531, 542 to 562, and 583 to 603; these read IITCLWITYFLSRSVTYSISL, VGTGLSYVSLIIFDLPSNLLM, LWLSRIQVTTGIIGACHAVLG, FIALRFFNGLAIAGMWPGFAF, IGWYYTAAQISSVATSLLSAA, LYGYQWMFLIWGVVAFTQGLF, LWPPIFMFFGVVGISNGLVNY, VSLLVAPIWVFDAIAILTVLP, MLFFVGSCLFVLAGLLITTFV, VGLLILGFGLGPTVPIIMTWV, VGVAAGLAIVSGLGNLGSVVA, and MCGMVGIAIVASIVMHMVQKF.

This sequence belongs to the major facilitator superfamily. Allantoate permease family.

The protein resides in the membrane. This is an uncharacterized protein from Schizosaccharomyces pombe (strain 972 / ATCC 24843) (Fission yeast).